A 336-amino-acid chain; its full sequence is Holliday junction branch migration complex subunit RuvB (336 aa).

The large ATPase domain (RuvB-L) stretch occupies residues 4–184 (ADRLVSADSS…FGIVQRLEFY (181 aa)). ATP is bound by residues Ile23, Arg24, Gly65, Lys68, Thr69, Thr70, 131 to 133 (EDY), Arg174, Tyr184, and Arg221. Thr69 contributes to the Mg(2+) binding site. The interval 185-255 (QIPDLQHIVS…IAAQALDMLN (71 aa)) is small ATPAse domain (RuvB-S). The head domain (RuvB-H) stretch occupies residues 258–336 (AEGFDYMDRK…HFGITPPEMP (79 aa)). 3 residues coordinate DNA: Arg294, Arg313, and Arg318.

This sequence belongs to the RuvB family. In terms of assembly, homohexamer. Forms an RuvA(8)-RuvB(12)-Holliday junction (HJ) complex. HJ DNA is sandwiched between 2 RuvA tetramers; dsDNA enters through RuvA and exits via RuvB. An RuvB hexamer assembles on each DNA strand where it exits the tetramer. Each RuvB hexamer is contacted by two RuvA subunits (via domain III) on 2 adjacent RuvB subunits; this complex drives branch migration. In the full resolvosome a probable DNA-RuvA(4)-RuvB(12)-RuvC(2) complex forms which resolves the HJ.

It localises to the cytoplasm. The enzyme catalyses ATP + H2O = ADP + phosphate + H(+). The RuvA-RuvB-RuvC complex processes Holliday junction (HJ) DNA during genetic recombination and DNA repair, while the RuvA-RuvB complex plays an important role in the rescue of blocked DNA replication forks via replication fork reversal (RFR). RuvA specifically binds to HJ cruciform DNA, conferring on it an open structure. The RuvB hexamer acts as an ATP-dependent pump, pulling dsDNA into and through the RuvAB complex. RuvB forms 2 homohexamers on either side of HJ DNA bound by 1 or 2 RuvA tetramers; 4 subunits per hexamer contact DNA at a time. Coordinated motions by a converter formed by DNA-disengaged RuvB subunits stimulates ATP hydrolysis and nucleotide exchange. Immobilization of the converter enables RuvB to convert the ATP-contained energy into a lever motion, pulling 2 nucleotides of DNA out of the RuvA tetramer per ATP hydrolyzed, thus driving DNA branch migration. The RuvB motors rotate together with the DNA substrate, which together with the progressing nucleotide cycle form the mechanistic basis for DNA recombination by continuous HJ branch migration. Branch migration allows RuvC to scan DNA until it finds its consensus sequence, where it cleaves and resolves cruciform DNA. This chain is Holliday junction branch migration complex subunit RuvB, found in Klebsiella pneumoniae (strain 342).